A 563-amino-acid polypeptide reads, in one-letter code: Cystathionine gamma-synthase-like protein ankD (563 aa).

Residues 1–37 (MGELGPASAQHGSDSISFSGSYTQPLGAPQPPNEPHA) are disordered. A compositionally biased stretch (polar residues) spans 10 to 24 (QHGSDSISFSGSYTQ).

Belongs to the trans-sulfuration enzymes family. MET7 subfamily. Pyridoxal 5'-phosphate serves as cofactor.

The catalysed reaction is cyclo(L-arginyl-(Z)-dehydro-3,4-dihydroxytyrosyl) + O-acetyl-L-homoserine = cyclo(L-arginyl-(Z)-dehydro-4-O-homoseryl-tyrosyl) + acetate + H(+). The protein operates within secondary metabolite biosynthesis. Functionally, cystathionine gamma-synthase-like protein; part of the ank cluster that mediates the biosynthesis of NK13650 C, a highly modified cyclo-arginine-tyrosine dipeptide. AnkD catalyzes the attachment of L-homoserine moiety using O-acetyl-L-homoserine as co-substrate. Within the pathway, the cyclodipeptide synthase ankA acts as the scaffold-generating enzyme and is responsible for formation of the cyclo-Arg-Tyr diketopiperazine (cRY) from L-Arg and L-Tyr. The ankA product cRY is desaturated by the cytochrome P450 monooxygenase ankB to yield a dehydro-cyclodipeptide intermediate. The FAD-dependent monooxygenase ankC then installs the m-OH, ankD catalyzes the attachment of L-homoserine, and ankE ligates citrate to the ankD product to yield NK13650 B. The O-methyltransferase ankF is responsible for methylation of the C-17 phenol group of NK13650 B to produce NK13650 D. Amidation of NK13650 D with L-Asp by ankG then leads to the production of NK13650 C, whereas amidation of NK13650 B produces NK13650 A. The polypeptide is Cystathionine gamma-synthase-like protein ankD (Aspergillus thermomutatus (Neosartorya pseudofischeri)).